A 495-amino-acid chain; its full sequence is Phytochrome A type 5 (495 aa).

Residues 1–21 (MSSSRPASSSSSRNRQSSQAR) are compositionally biased toward low complexity. The disordered stretch occupies residues 1–24 (MSSSRPASSSSSRNRQSSQARVLA). One can recognise a GAF domain in the interval 217–402 (SMEMLCNTVV…VFAVHVNREF (186 aa)). A phytochromobilin-binding site is contributed by cysteine 322.

It belongs to the phytochrome family. As to quaternary structure, homodimer. In terms of processing, contains one covalently linked phytochromobilin chromophore.

In terms of biological role, regulatory photoreceptor which exists in two forms that are reversibly interconvertible by light: the Pr form that absorbs maximally in the red region of the spectrum and the Pfr form that absorbs maximally in the far-red region. Photoconversion of Pr to Pfr induces an array of morphogenic responses, whereas reconversion of Pfr to Pr cancels the induction of those responses. Pfr controls the expression of a number of nuclear genes including those encoding the small subunit of ribulose-bisphosphate carboxylase, chlorophyll A/B binding protein, protochlorophyllide reductase, rRNA, etc. It also controls the expression of its own gene(s) in a negative feedback fashion. The chain is Phytochrome A type 5 (PHYA5) from Avena sativa (Oat).